We begin with the raw amino-acid sequence, 465 residues long: Respiratory transcription factor ZNF1 (465 aa).

Positions 8–34 (CDCCCIRRVKCDRKKPCKCCLQHNLQC) form a DNA-binding region, zn(2)-C6 fungal-type.

It belongs to the MAL13 family.

The protein resides in the nucleus. Transcription factor that regulates respiratory growth and plays a critical role in stress adaptation during non-fermentative growth. Binds to promoters of genes involved in non-fermentative metabolism, including processes such as gluconeogenesis (PCK1, FBP1 and MDH2), glyoxylate shunt (MLS1 and ICL1) and the tricarboxylic acid cycle (ACO1). Plays a role in maintaining mitochondrial morphology and function. Also plays a role in tolerance to pH and osmotic stress, especially during the oxidative metabolism. This Saccharomyces cerevisiae (strain ATCC 204508 / S288c) (Baker's yeast) protein is Respiratory transcription factor ZNF1.